The sequence spans 606 residues: Mitogen-activated protein kinase kinase kinase 7 (606 aa).

Positions 1 to 300 (MSTASAASSS…FPGADEPLQY (300 aa)) are interaction with MAPK8IP1. Positions 36–291 (IEVEEVVGRG…KIMTHLMRYF (256 aa)) constitute a Protein kinase domain. Residues 42 to 50 (VGRGAFGVV) and lysine 63 each bind ATP. A Glycyl lysine isopeptide (Lys-Gly) (interchain with G-Cter in ubiquitin) cross-link involves residue lysine 72. Aspartate 156 serves as the catalytic Proton acceptor. A Glycyl lysine isopeptide (Lys-Gly) (interchain with G-Cter in ubiquitin) cross-link involves residue lysine 158. Phosphothreonine; by autocatalysis occurs at positions 184 and 187. Serine 192 bears the Phosphoserine; by autocatalysis mark. A Glycyl lysine isopeptide (Lys-Gly) (interchain with G-Cter in ubiquitin) cross-link involves residue lysine 209. Disordered regions lie at residues 301–338 (PCQYSDEGQSNSATSTGSFMDIASTNTSNKSDTNMEQV) and 354–391 (KNQAKQQSESGRLSLGASRGSSVESLPPASEGKRMSAD). A compositionally biased stretch (polar residues) spans 306–338 (DEGQSNSATSTGSFMDIASTNTSNKSDTNMEQV). Over residues 361–375 (SESGRLSLGASRGSS) the composition is skewed to low complexity. Phosphoserine is present on residues serine 367, serine 389, and serine 439. Positions 443-452 (LTVTGTEPGQ) are enriched in polar residues. A disordered region spans residues 443-493 (LTVTGTEPGQVSSRSSSPSVRMITTSGPTSEKPTRSHPWTPDDSTDTNGSD). Residues 453-463 (VSSRSSSPSVR) are compositionally biased toward low complexity. Position 455 is a phosphoserine (serine 455). The segment covering 464 to 473 (MITTSGPTSE) has biased composition (polar residues).

This sequence belongs to the protein kinase superfamily. STE Ser/Thr protein kinase family. MAP kinase kinase kinase subfamily. As to quaternary structure, can form homodimer. Binds both upstream activators and downstream substrates in multimolecular complexes. Interacts with TAB1/MAP3K7IP1, TAB2/MAP3K7IP2 and TAB3/MAP3K7IP3. Identified in the TRIKA2 complex composed of MAP3K7/TAK1, TAB1/MAP3K7IP1 and TAB2/MAP3K7IP2. Interacts with PPM1L and PPM1B/PP2CB. Interaction with PP2A and PPP6C leads to its repressed activity. Interacts with TRAF6 and TAB1/MAP3K7IP1; during IL-1 signaling. Interacts with TAOK1 and TAOK2; interaction with TAOK2 interferes with MAP3K7 interaction with IKKA, thus preventing NF-kappa-B activation. Interacts with DYNC2I2 (via WD domains). Interacts with CYLD and RBCK1. Interacts with TGFBR1; induces MAP3K7/TAK1 activation by TRAF6. Interacts with MAPK8IP1 and SMAD6. Interacts with isoform 1 of VRK2. Interacts with DAB2; the interaction is induced by TGF-beta stimulation and may mediate TGF-beta stimulated JNK activation. Interacts with TRIM5. Part of a complex containing ITCH, NDFIP1 and MAP3K7. Interacts with IFIT5; the interaction synergizes the recruitment of IKK to MAP3K7 and enhances IKK phosphorylation. Interacts with PLEKHM1 (via N- and C-terminus). Found in a complex with SH3RF1, RAC2, MAP2K7/MKK7, MAPK8IP1/JIP1, MAPK8/JNK1 and MAPK9/JNK2. Interacts with SASH1. Interacts with RIPK1. Requires Mg(2+) as cofactor. In terms of processing, association with TAB1/MAP3K7IP1 promotes autophosphorylation at Ser-192 and subsequent activation. Association with TAB2/MAP3K7IP2, itself associated with free unanchored Lys-63 polyubiquitin chain, promotes autophosphorylation and subsequent activation of MAP3K7. Dephosphorylation at Ser-192 by PPM1B/PP2CB and at Thr-187 by PP2A and PPP6C leads to inactivation. 'Lys-48'-linked polyubiquitination at Lys-72 is induced by TNFalpha, and leads to proteasomal degradation. Undergoes 'Lys-48'-linked polyubiquitination catalyzed by ITCH. 'Lys-63'-linked polyubiquitination at Lys-158 by TRIM8 does not lead to proteasomal degradation but contributes to autophosphorylation and activation. Deubiquitinated by CYLD, a protease that selectively cleaves 'Lys-63'-linked ubiquitin chains. Deubiquitinated by USP19; leading to negative regulation of TNF-alpha- and IL-1beta-triggered NF-kappa-B activation.

It is found in the cytoplasm. The protein resides in the cell membrane. The enzyme catalyses L-seryl-[protein] + ATP = O-phospho-L-seryl-[protein] + ADP + H(+). It catalyses the reaction L-threonyl-[protein] + ATP = O-phospho-L-threonyl-[protein] + ADP + H(+). Activated by pro-inflammatory cytokines and in response to physical and chemical stresses, including osmotic stress, oxidative stress, arsenic and ultraviolet light irradiation. Activated by 'Lys-63'-linked polyubiquitination and by autophosphorylation. Association with TAB1/MAP3K7IP1 and TAB2/MAP3K7IP2 promotes activation through autophosphorylation, whereas PPM1B/PP2CB, PP2A and PPP6C dephosphorylation leads to inactivation. Ceramides are also able to activate MAP3K7/TAK1. Serine/threonine kinase which acts as an essential component of the MAP kinase signal transduction pathway. Plays an important role in the cascades of cellular responses evoked by changes in the environment. Mediates signal transduction of TRAF6, various cytokines including interleukin-1 (IL-1), transforming growth factor-beta (TGFB), TGFB-related factors like BMP2 and BMP4, toll-like receptors (TLR), tumor necrosis factor receptor CD40 and B-cell receptor (BCR). Once activated, acts as an upstream activator of the MKK/JNK signal transduction cascade and the p38 MAPK signal transduction cascade through the phosphorylation and activation of several MAP kinase kinases like MAP2K1/MEK1, MAP2K3/MKK3, MAP2K6/MKK6 and MAP2K7/MKK7. These MAP2Ks in turn activate p38 MAPKs and c-jun N-terminal kinases (JNKs); both p38 MAPK and JNK pathways control the transcription factors activator protein-1 (AP-1). Independently of MAP2Ks and p38 MAPKs, acts as a key activator of NF-kappa-B by promoting activation of the I-kappa-B-kinase (IKK) core complex. Mechanistically, recruited to polyubiquitin chains of RIPK2 and IKBKG/NEMO via TAB2/MAP3K7IP2 and TAB3/MAP3K7IP3, and catalyzes phosphorylation and activation of IKBKB/IKKB component of the IKK complex, leading to NF-kappa-B activation. In osmotic stress signaling, plays a major role in the activation of MAPK8/JNK1, but not that of NF-kappa-B. Promotes TRIM5 capsid-specific restriction activity. Phosphorylates RIPK1 at 'Ser-321' which positively regulates RIPK1 interaction with RIPK3 to promote necroptosis but negatively regulates RIPK1 kinase activity and its interaction with FADD to mediate apoptosis. Phosphorylates STING1 in response to cGAMP-activation, promoting association between STEEP1 and STING1 and STING1 translocation to COPII vesicles. The sequence is that of Mitogen-activated protein kinase kinase kinase 7 (MAP3K7) from Pongo abelii (Sumatran orangutan).